Consider the following 290-residue polypeptide: Endoplasmic reticulum-Golgi intermediate compartment protein 1 (290 aa).

The Cytoplasmic portion of the chain corresponds to 1–27; sequence MSFDVRRFDIYRKVPKDLTQPTYTGAF. Residues 28–48 form a helical membrane-spanning segment; sequence ISICCCVFMLFLFLSELTGFI. The Lumenal portion of the chain corresponds to 49–254; sequence ATEIVNELYV…RRRPFYRFIT (206 aa). The N-linked (GlcNAc...) asparagine glycan is linked to Asn-74. A helical transmembrane segment spans residues 255–275; that stretch reads TICAIIGGTFTVAGIIDSCIF. Over 276–290 the chain is Cytoplasmic; that stretch reads TASEAWKKIQIGKMS.

It belongs to the ERGIC family.

It localises to the endoplasmic reticulum membrane. The protein resides in the endoplasmic reticulum-Golgi intermediate compartment membrane. It is found in the golgi apparatus membrane. Its function is as follows. Possible role in transport between endoplasmic reticulum and Golgi. In Danio rerio (Zebrafish), this protein is Endoplasmic reticulum-Golgi intermediate compartment protein 1 (ergic1).